A 107-amino-acid polypeptide reads, in one-letter code: Guanylin (107 aa).

Residues 1-20 (MNTFLLSALCLGAWAALVGA) form the signal peptide. Residues 21-92 (VTVQDGDFSF…LNRLAVIAQD (72 aa)) constitute a propeptide that is removed on maturation. Cystine bridges form between cysteine 61–cysteine 74, cysteine 96–cysteine 104, and cysteine 99–cysteine 107.

Belongs to the guanylin family.

It localises to the secreted. Endogenous activator of intestinal guanylate cyclase. It stimulates this enzyme through the same receptor binding region as the heat-stable enterotoxins. This chain is Guanylin (GUCA2A), found in Cavia porcellus (Guinea pig).